We begin with the raw amino-acid sequence, 404 residues long: G1/S-specific cyclin-E2 (404 aa).

The disordered stretch occupies residues 1 to 45; the sequence is MSRRSSRLQAKQQPQASQTDSPQEAQIIQAKKRKTAQDVKKRKEE. Positions 7–26 are enriched in polar residues; it reads RLQAKQQPQASQTDSPQEAQ. Phosphoserine is present on S21. Residues 35–45 are compositionally biased toward basic and acidic residues; the sequence is TAQDVKKRKEE. N6-lactoyllysine is present on K348. The residue at position 383 (S383) is a Phosphoserine. T392 is modified (phosphothreonine).

Belongs to the cyclin family. Cyclin E subfamily. In terms of assembly, interacts with the CDK2 (in vivo) and CDK3 (in vitro) protein kinases to form a serine/threonine kinase holoenzyme complex. The cyclin subunit imparts substrate specificity to the complex. Phosphorylation by CDK2 triggers its release from CDK2 and degradation via the ubiquitin proteasome pathway. Post-translationally, lactylated at Lys-348. Delactylated by SIRT3.

The protein localises to the nucleus. Its function is as follows. Essential for the control of the cell cycle at the late G1 and early S phase. The protein is G1/S-specific cyclin-E2 (CCNE2) of Bos taurus (Bovine).